The primary structure comprises 241 residues: ATP synthase subunit a (241 aa).

The next 5 membrane-spanning stretches (helical) occupy residues 30 to 50 (GQVFLTSWILLGSLLVFISLG), 91 to 111 (FIGTLFLFVFVSNWGGALIPW), 128 to 148 (INTTIALALLVSLSYFYAGLS), 193 to 213 (LVVGVLVFLVPLVLPIPVMFL), and 214 to 234 (GLFTSAIQALIFATLAAYYIG).

It belongs to the ATPase A chain family. In terms of assembly, F-type ATPases have 2 components, CF(1) - the catalytic core - and CF(0) - the membrane proton channel. CF(1) has five subunits: alpha(3), beta(3), gamma(1), delta(1), epsilon(1). CF(0) has four main subunits: a, b, b' and c.

The protein localises to the cellular thylakoid membrane. Its function is as follows. Key component of the proton channel; it plays a direct role in the translocation of protons across the membrane. In Prochlorococcus marinus (strain MIT 9515), this protein is ATP synthase subunit a.